We begin with the raw amino-acid sequence, 170 residues long: MKRILLLGLALAPVALFASQGAVETDIVQRTVNFIIFAAILWYLLADKIKAFFANRTLSIQAELDKVQETLKASQDKVTDAQKKLEEARKLAAEIIESAKTDIDSVKQKVTTAVDADITNLNRNLEEMMKIETSKAKKQVVAEVLEELLSSENIKLTQQELVDVVLKKVA.

The helical transmembrane segment at 4-24 (ILLLGLALAPVALFASQGAVE) threads the bilayer.

The protein belongs to the ATPase B chain family. In terms of assembly, F-type ATPases have 2 components, F(1) - the catalytic core - and F(0) - the membrane proton channel. F(1) has five subunits: alpha(3), beta(3), gamma(1), delta(1), epsilon(1). F(0) has three main subunits: a(1), b(2) and c(10-14). The alpha and beta chains form an alternating ring which encloses part of the gamma chain. F(1) is attached to F(0) by a central stalk formed by the gamma and epsilon chains, while a peripheral stalk is formed by the delta and b chains.

Its subcellular location is the cell inner membrane. F(1)F(0) ATP synthase produces ATP from ADP in the presence of a proton or sodium gradient. F-type ATPases consist of two structural domains, F(1) containing the extramembraneous catalytic core and F(0) containing the membrane proton channel, linked together by a central stalk and a peripheral stalk. During catalysis, ATP synthesis in the catalytic domain of F(1) is coupled via a rotary mechanism of the central stalk subunits to proton translocation. Its function is as follows. Component of the F(0) channel, it forms part of the peripheral stalk, linking F(1) to F(0). This chain is ATP synthase subunit b, found in Aliarcobacter butzleri (strain RM4018) (Arcobacter butzleri).